Reading from the N-terminus, the 639-residue chain is Chaperone protein DnaK (639 aa).

A Phosphothreonine; by autocatalysis modification is found at Thr198. The interval 604–639 (KSQAQGGDNADAGKQANAAADDVVDAEFEEVKDDKK) is disordered. The segment covering 606-624 (QAQGGDNADAGKQANAAAD) has biased composition (low complexity). The span at 625 to 639 (DVVDAEFEEVKDDKK) shows a compositional bias: acidic residues.

Belongs to the heat shock protein 70 family.

Acts as a chaperone. This Shewanella baltica (strain OS223) protein is Chaperone protein DnaK.